We begin with the raw amino-acid sequence, 134 residues long: Nogalonic acid methyl ester cyclase (134 aa).

Gln95 is a nogalaviketone binding site. Asp111 acts as the Proton donor/acceptor in catalysis.

Belongs to the polyketide cyclase DnrD family. In terms of assembly, homotetramer. Dimer of dimers.

It catalyses the reaction nogalaviketone = methyl nogalonate. It participates in antibiotic biosynthesis. Its function is as follows. Involved in the biosynthesis of the aromatic polyketide antibiotic nogalamycin. Catalyzes the formation of nogalaviketone from nogalonic acid methyl ester (NAME), the last ring-closure step in the biosynthesis of nogalamycin. The protein is Nogalonic acid methyl ester cyclase of Streptomyces nogalater.